The chain runs to 680 residues: DNA ligase (680 aa).

NAD(+) contacts are provided by residues 44-48 (DYIYD), 94-95 (SL), and E124. Residue K126 is the N6-AMP-lysine intermediate of the active site. Positions 147, 181, 297, and 321 each coordinate NAD(+). C415, C418, C433, and C438 together coordinate Zn(2+). The BRCT domain occupies 598 to 680 (DENSFFYGKK…VDEQVKEDGK (83 aa)).

Belongs to the NAD-dependent DNA ligase family. LigA subfamily. Mg(2+) is required as a cofactor. Requires Mn(2+) as cofactor.

The catalysed reaction is NAD(+) + (deoxyribonucleotide)n-3'-hydroxyl + 5'-phospho-(deoxyribonucleotide)m = (deoxyribonucleotide)n+m + AMP + beta-nicotinamide D-nucleotide.. In terms of biological role, DNA ligase that catalyzes the formation of phosphodiester linkages between 5'-phosphoryl and 3'-hydroxyl groups in double-stranded DNA using NAD as a coenzyme and as the energy source for the reaction. It is essential for DNA replication and repair of damaged DNA. This chain is DNA ligase, found in Leuconostoc mesenteroides subsp. mesenteroides (strain ATCC 8293 / DSM 20343 / BCRC 11652 / CCM 1803 / JCM 6124 / NCDO 523 / NBRC 100496 / NCIMB 8023 / NCTC 12954 / NRRL B-1118 / 37Y).